The sequence spans 1955 residues: Callose synthase 3 (1955 aa).

Residues Met1–Arg488 lie on the Cytoplasmic side of the membrane. The helical transmembrane segment at Met489–Gln509 threads the bilayer. Topologically, residues Pro510 to Lys521 are extracellular. Residues Val522–Ile542 traverse the membrane as a helical segment. Residues Leu543–Arg558 lie on the Cytoplasmic side of the membrane. A helical transmembrane segment spans residues Tyr559 to Tyr579. Residues Ser580–Leu604 lie on the Extracellular side of the membrane. A helical membrane pass occupies residues Phe605–Phe625. Residues Pro626–Ser660 are Cytoplasmic-facing. The chain crosses the membrane as a helical span at residues Ala661 to Phe681. Over Ser682–Asn717 the chain is Extracellular. A helical membrane pass occupies residues Ile718–Ile738. Over Trp739–Tyr1517 the chain is Cytoplasmic. Residues Phe1518–Leu1538 traverse the membrane as a helical segment. The Extracellular segment spans residues Tyr1539 to Gln1566. Residues Ile1567–Met1587 form a helical membrane-spanning segment. Residues Glu1588–Thr1597 lie on the Cytoplasmic side of the membrane. The helical transmembrane segment at Ala1598–Leu1618 threads the bilayer. Topologically, residues Gly1619–His1661 are extracellular. Residues Phe1662–Tyr1682 traverse the membrane as a helical segment. The Cytoplasmic segment spans residues Arg1683–Tyr1688. The helical transmembrane segment at Leu1689 to Phe1709 threads the bilayer. The Extracellular portion of the chain corresponds to Asn1710–Arg1761. Residues Gly1762–Tyr1782 traverse the membrane as a helical segment. Residues His1783 to Asn1792 lie on the Cytoplasmic side of the membrane. A helical membrane pass occupies residues Phe1793–Val1813. Residues Ser1814–Gly1833 lie on the Extracellular side of the membrane. Residues Leu1834–Ile1854 form a helical membrane-spanning segment. The Cytoplasmic segment spans residues Gln1855 to Asp1856. Residues Ile1857–Ala1877 form a helical membrane-spanning segment. The Extracellular portion of the chain corresponds to Cys1878–Glu1899. Residues Ile1900–Ser1920 form a helical membrane-spanning segment. The Cytoplasmic segment spans residues Glu1921–Glu1955.

Belongs to the glycosyltransferase 48 family.

The protein resides in the cell membrane. The catalysed reaction is [(1-&gt;3)-beta-D-glucosyl](n) + UDP-alpha-D-glucose = [(1-&gt;3)-beta-D-glucosyl](n+1) + UDP + H(+). Involved in callose synthesis at the forming cell plate during cytokinesis. During plant growth and development, callose is found as a transitory component of the cell plate in dividing cells, is a major component of pollen mother cell walls and pollen tubes, and is found as a structural component of plasmodesmatal canals. In Arabidopsis thaliana (Mouse-ear cress), this protein is Callose synthase 3 (CALS3).